Consider the following 458-residue polypeptide: RuvB-like protein 1 (458 aa).

Residue G73 to T80 coordinates ATP.

This sequence belongs to the RuvB family. Interacts with FRI, and with FLX and FES1, two component of the transcription activator complex FRI-C. Interacts with the disease resistance genes RPM1 and RPP5.

It localises to the nucleus. It carries out the reaction ATP + H2O = ADP + phosphate + H(+). Its function is as follows. Proposed core component of the chromatin remodeling INO80 complex which is involved in transcriptional regulation, DNA replication and probably DNA repair. Component of the NuA4 histone acetyltransferase complex which is involved in transcriptional activation of select genes principally by acetylation of nucleosomal histones H4 and H2A. Has single-stranded DNA-stimulated ATPase and ATP-dependent DNA helicase (3' to 5') activity suggesting a role in nuclear processes such as recombination and transcription. The polypeptide is RuvB-like protein 1 (RIN1) (Arabidopsis thaliana (Mouse-ear cress)).